Reading from the N-terminus, the 194-residue chain is Adenylate kinase (194 aa).

Gly11–Thr16 is an ATP binding site. An NMP region spans residues Ser31–Val60. Residues Thr32, Arg37, His58–Val60, Gly86–Arg89, and Gln93 each bind AMP. An LID region spans residues Asn127–Asp137. Arg128 is a binding site for ATP. AMP-binding residues include Arg134 and Arg145. ATP is bound at residue Gly173.

It belongs to the adenylate kinase family. In terms of assembly, monomer.

It is found in the cytoplasm. The catalysed reaction is AMP + ATP = 2 ADP. It participates in purine metabolism; AMP biosynthesis via salvage pathway; AMP from ADP: step 1/1. In terms of biological role, catalyzes the reversible transfer of the terminal phosphate group between ATP and AMP. Plays an important role in cellular energy homeostasis and in adenine nucleotide metabolism. The sequence is that of Adenylate kinase from Porphyromonas gingivalis (strain ATCC BAA-308 / W83).